A 256-amino-acid chain; its full sequence is MRHPVVMGNWKLNGSKEMVVELLNGLNAELEGVTGVDVAVAPPALFVDLAERTLTEAGSAIILGAQNTDLNNSGAFTGDMSPAMLKEFGATHIIIGHSERREYHNESDEFVAKKFAFLKENGLTPVLCIGESEAQNEAGETVAVCARQIDAVINTQGVDALNGAIIAYEPIWAIGTGKAATAEDAQRIHAQIRAHIAEKSEEVAKNVVIQYGGSVKPENAAAYFAQPDIDGALVGGAALDAKSFAAIAKAAAEAKA.

Substrate is bound at residue 9–11 (NWK). Residue His-97 is the Electrophile of the active site. Glu-169 (proton acceptor) is an active-site residue. Substrate-binding positions include Gly-175, Ser-214, and 235 to 236 (GG).

Belongs to the triosephosphate isomerase family. In terms of assembly, homodimer.

It localises to the cytoplasm. It catalyses the reaction D-glyceraldehyde 3-phosphate = dihydroxyacetone phosphate. The protein operates within carbohydrate biosynthesis; gluconeogenesis. Its pathway is carbohydrate degradation; glycolysis; D-glyceraldehyde 3-phosphate from glycerone phosphate: step 1/1. Its function is as follows. Involved in the gluconeogenesis. Catalyzes stereospecifically the conversion of dihydroxyacetone phosphate (DHAP) to D-glyceraldehyde-3-phosphate (G3P). The protein is Triosephosphate isomerase of Aliivibrio fischeri (strain ATCC 700601 / ES114) (Vibrio fischeri).